We begin with the raw amino-acid sequence, 318 residues long: Adenylate isopentenyltransferase 4 (318 aa).

12 to 19 contributes to the ATP binding site; that stretch reads GATGSGKS.

Belongs to the IPP transferase family. Mg(2+) is required as a cofactor. As to expression, expressed in immature seeds with highest expression in the chalazal endosperm.

Its subcellular location is the cytoplasm. The catalysed reaction is dimethylallyl diphosphate + ADP = N(6)-(dimethylallyl)adenosine 5'-diphosphate + diphosphate. The enzyme catalyses dimethylallyl diphosphate + ATP = N(6)-(dimethylallyl)adenosine 5'-triphosphate + diphosphate. Its function is as follows. Involved in cytokinin biosynthesis. Catalyzes the transfer of an isopentenyl group from dimethylallyl diphosphate (DMAPP) to ATP and ADP, but not to AMP. Has no DMAPP:tRNA isopentenyltransferase activity. The polypeptide is Adenylate isopentenyltransferase 4 (IPT4) (Arabidopsis thaliana (Mouse-ear cress)).